Reading from the N-terminus, the 240-residue chain is uncharacterized protein (240 aa).

Its subcellular location is the mitochondrion. This is an uncharacterized protein from Arabidopsis thaliana (Mouse-ear cress).